The sequence spans 219 residues: uncharacterized protein (219 aa).

Residues 1 to 17 (MIINNQNSPQSINTPSS) are compositionally biased toward low complexity. Residues 1–31 (MIINNQNSPQSINTPSSVSSRQHINKSKKKK) are disordered. Helical transmembrane passes span 49 to 69 (SLATVFGVIGGLVLGIVLVCK) and 83 to 105 (LVYRIVGIFLSAGTGGNLSSYIG). Positions 135-219 (NHRSPIPLTN…NSDLEIPIPI (85 aa)) are disordered. The span at 144–212 (NLNNNNNNNN…SNNNNDNNSD (69 aa)) shows a compositional bias: low complexity.

It is found in the membrane. This is an uncharacterized protein from Dictyostelium discoideum (Social amoeba).